A 269-amino-acid polypeptide reads, in one-letter code: 4-hydroxy-tetrahydrodipicolinate reductase (269 aa).

Residues 10–15 (GANGRM), Glu36, 99–101 (GTT), and 123–126 (AANF) contribute to the NAD(+) site. Catalysis depends on His156, which acts as the Proton donor/acceptor. His157 is a (S)-2,3,4,5-tetrahydrodipicolinate binding site. Residue Lys160 is the Proton donor of the active site. 166–167 (GT) is a (S)-2,3,4,5-tetrahydrodipicolinate binding site.

The protein belongs to the DapB family.

Its subcellular location is the cytoplasm. It catalyses the reaction (S)-2,3,4,5-tetrahydrodipicolinate + NAD(+) + H2O = (2S,4S)-4-hydroxy-2,3,4,5-tetrahydrodipicolinate + NADH + H(+). It carries out the reaction (S)-2,3,4,5-tetrahydrodipicolinate + NADP(+) + H2O = (2S,4S)-4-hydroxy-2,3,4,5-tetrahydrodipicolinate + NADPH + H(+). It functions in the pathway amino-acid biosynthesis; L-lysine biosynthesis via DAP pathway; (S)-tetrahydrodipicolinate from L-aspartate: step 4/4. Its function is as follows. Catalyzes the conversion of 4-hydroxy-tetrahydrodipicolinate (HTPA) to tetrahydrodipicolinate. The polypeptide is 4-hydroxy-tetrahydrodipicolinate reductase (Neisseria gonorrhoeae (strain ATCC 700825 / FA 1090)).